The primary structure comprises 162 residues: Nucleotide-binding protein A2cp1_0112 (162 aa).

The protein belongs to the YajQ family.

Nucleotide-binding protein. In Anaeromyxobacter dehalogenans (strain 2CP-1 / ATCC BAA-258), this protein is Nucleotide-binding protein A2cp1_0112.